Reading from the N-terminus, the 283-residue chain is Orotidine 5'-phosphate decarboxylase (283 aa).

The active-site Proton donor is the Lys97.

This sequence belongs to the OMP decarboxylase family. Type 2 subfamily.

The enzyme catalyses orotidine 5'-phosphate + H(+) = UMP + CO2. The protein operates within pyrimidine metabolism; UMP biosynthesis via de novo pathway; UMP from orotate: step 2/2. This is Orotidine 5'-phosphate decarboxylase from Clostridium botulinum (strain Kyoto / Type A2).